Consider the following 294-residue polypeptide: MYB-like transcription factor ODO1 (294 aa).

2 HTH myb-type domains span residues 9–61 (KLGV…TNYL) and 62–116 (RPDL…KKKL). DNA-binding regions (H-T-H motif) lie at residues 37–61 (WRAV…TNYL) and 89–112 (WSKI…NTHI). Disordered regions lie at residues 128 to 152 (PLKK…NGHQ) and 171 to 191 (TEFD…NSSC).

As to expression, restricted to the petals, with the highest expression in the limb, probably in both epidermal and mesophyll cell layers.

It is found in the nucleus. In terms of biological role, R2R3 MYB-type transcription factor controlling the production of volatile organic compounds (VOCs), including floral volatile benzenoids and phenylpropanoids (FVBP), in flowers of fragrant cultivars (e.g. cv. Mitchell and cv. V26) by regulating the shikimate pathway, via the activation of several genes (e.g. EPSPS, ADT1, PAL1, CFAT and CCoAOMT1). This scent, mostly produced in the evening and night by the petals, attracts the pollinators (e.g. the night-active hawkmoth pollinator Manduca sexta). Promotes the expression of ABCG1 in petals three hours before the onset of volatile scent emission. Anthocyanins production is not controlled by ODO1 as color and scent are produced at different stages of development. Seems to trigger a negative feed-back loop that represses the expression of EOBI. In Petunia hybrida (Petunia), this protein is MYB-like transcription factor ODO1.